A 513-amino-acid chain; its full sequence is ATP synthase subunit alpha (513 aa).

Residue 169–176 (GDRQTGKT) coordinates ATP.

The protein belongs to the ATPase alpha/beta chains family. F-type ATPases have 2 components, CF(1) - the catalytic core - and CF(0) - the membrane proton channel. CF(1) has five subunits: alpha(3), beta(3), gamma(1), delta(1), epsilon(1). CF(0) has three main subunits: a(1), b(2) and c(9-12). The alpha and beta chains form an alternating ring which encloses part of the gamma chain. CF(1) is attached to CF(0) by a central stalk formed by the gamma and epsilon chains, while a peripheral stalk is formed by the delta and b chains.

It localises to the cell inner membrane. The enzyme catalyses ATP + H2O + 4 H(+)(in) = ADP + phosphate + 5 H(+)(out). Functionally, produces ATP from ADP in the presence of a proton gradient across the membrane. The alpha chain is a regulatory subunit. This is ATP synthase subunit alpha from Escherichia coli O81 (strain ED1a).